The primary structure comprises 142 residues: Hemoglobin subunit theta-1 (142 aa).

The 141-residue stretch at 2-142 (ALAAADRATV…VISALASDCR (141 aa)) folds into the Globin domain. Heme b-binding residues include His-59 and His-88.

The protein belongs to the globin family.

The polypeptide is Hemoglobin subunit theta-1 (HBQ1) (Equus caballus (Horse)).